A 166-amino-acid polypeptide reads, in one-letter code: Putative glycine-rich cell wall structural protein 1 (166 aa).

An N-terminal signal peptide occupies residues 1 to 23 (MARKVIALAFLLLLTISLSKSNA). R2; Tyr-rich repeat units follow at residues 56–62 (GYGYNYG) and 93–99 (GYGYGYG). Residues 105–125 (AQGQGSGGGGGGGGGGGGGGS) are disordered. An R2; Tyr-rich repeat occupies 132–138 (GYGYGYG). Residues 144–160 (GGGGGGDGGGGGGGGSA) are compositionally biased toward gly residues. The disordered stretch occupies residues 144–166 (GGGGGGDGGGGGGGGSAYVGRHE).

It is found in the secreted. Its subcellular location is the cell wall. In terms of biological role, responsible for plasticity of the cell wall. The polypeptide is Putative glycine-rich cell wall structural protein 1 (GRP-1) (Oryza sativa subsp. japonica (Rice)).